The following is a 37-amino-acid chain: MKVYSSVRKICKSCGLIRRHGKLFVRCINSKHNQRQN.

It belongs to the bacterial ribosomal protein bL36 family.

Its subcellular location is the plastid. This chain is Large ribosomal subunit protein bL36c (rpl36), found in Euglena longa (Euglenophycean alga).